Here is a 354-residue protein sequence, read N- to C-terminus: 3-dehydroquinate synthase (354 aa).

Residues aspartate 39, tyrosine 45, 68–71 (EKTK), 100–104 (GATGD), 124–125 (TT), lysine 136, lysine 145, and 163–166 (FLKT) each bind NAD(+). Zn(2+) is bound by residues glutamate 178, histidine 242, and histidine 256.

This sequence belongs to the sugar phosphate cyclases superfamily. Dehydroquinate synthase family. NAD(+) is required as a cofactor. Co(2+) serves as cofactor. The cofactor is Zn(2+).

The protein resides in the cytoplasm. It carries out the reaction 7-phospho-2-dehydro-3-deoxy-D-arabino-heptonate = 3-dehydroquinate + phosphate. The protein operates within metabolic intermediate biosynthesis; chorismate biosynthesis; chorismate from D-erythrose 4-phosphate and phosphoenolpyruvate: step 2/7. Its function is as follows. Catalyzes the conversion of 3-deoxy-D-arabino-heptulosonate 7-phosphate (DAHP) to dehydroquinate (DHQ). The sequence is that of 3-dehydroquinate synthase from Staphylococcus aureus (strain MRSA252).